A 133-amino-acid chain; its full sequence is Small ribosomal subunit protein uS8 (133 aa).

The protein belongs to the universal ribosomal protein uS8 family. Part of the 30S ribosomal subunit. Contacts proteins S5 and S12.

Functionally, one of the primary rRNA binding proteins, it binds directly to 16S rRNA central domain where it helps coordinate assembly of the platform of the 30S subunit. The sequence is that of Small ribosomal subunit protein uS8 from Salinibacter ruber (strain DSM 13855 / M31).